A 71-amino-acid chain; its full sequence is Putative antitoxin VapB15 (71 aa).

The protein belongs to the UPF0330 family.

Its function is as follows. Possibly the antitoxin component of a type II toxin-antitoxin (TA) system. Its cognate toxin is VapC15 (Potential). The chain is Putative antitoxin VapB15 (vapB15) from Archaeoglobus fulgidus (strain ATCC 49558 / DSM 4304 / JCM 9628 / NBRC 100126 / VC-16).